The following is a 169-amino-acid chain: Peptide deformylase 1 (169 aa).

Residues C93 and H135 each contribute to the Fe cation site. The active site involves E136. H139 is a Fe cation binding site.

This sequence belongs to the polypeptide deformylase family. The cofactor is Fe(2+).

The catalysed reaction is N-terminal N-formyl-L-methionyl-[peptide] + H2O = N-terminal L-methionyl-[peptide] + formate. Removes the formyl group from the N-terminal Met of newly synthesized proteins. Requires at least a dipeptide for an efficient rate of reaction. N-terminal L-methionine is a prerequisite for activity but the enzyme has broad specificity at other positions. This Corynebacterium glutamicum (strain ATCC 13032 / DSM 20300 / JCM 1318 / BCRC 11384 / CCUG 27702 / LMG 3730 / NBRC 12168 / NCIMB 10025 / NRRL B-2784 / 534) protein is Peptide deformylase 1.